Consider the following 712-residue polypeptide: Potassium transporter 1 (712 aa).

Residues 1–19 (MNQSPSLIEQGISQQHLKT) are Cytoplasmic-facing. The chain crosses the membrane as a helical span at residues 20 to 40 (LSCANVLTLAYQSLGVIYGDL). Residues 41–67 (STSPLYVYKTTFSGKLSLHEDDEEIFG) lie on the Extracellular side of the membrane. Residues 68–88 (VFSFIFWTFTLIALFKYVFIV) form a helical membrane-spanning segment. The Cytoplasmic portion of the chain corresponds to 89–154 (LSADDNGEGG…FFEKHPKSQK (66 aa)). The helical transmembrane segment at 155–175 (CLLLFVLLGTCMAIGDSVLTP) threads the bilayer. Residues 176–189 (TISVLSAVSGVKLK) are Extracellular-facing. A helical membrane pass occupies residues 190–210 (IPNLHENYVVIIACIILVAIF). Topologically, residues 211 to 219 (SVQRYGTHR) are cytoplasmic. A helical membrane pass occupies residues 220-240 (VAFIFAPISTAWLLSISSIGV). At 241 to 267 (YNTIKWNPRIVSALSPVYMYKFLRSTG) the chain is on the extracellular side. The chain crosses the membrane as a helical span at residues 268 to 288 (VEGWVSLGGVVLSITGVETMF). The Cytoplasmic segment spans residues 289–300 (ADLGHFSSLSIK). Residues 301-321 (VAFSFFVYPCLILAYMGEAAF) form a helical membrane-spanning segment. Topologically, residues 322–340 (LSKHHEDIQQSFYKAIPEP) are extracellular. The chain crosses the membrane as a helical span at residues 341 to 361 (VFWPVFIVATFAAVVGSQAVI). The Cytoplasmic portion of the chain corresponds to 362–392 (SATFSIISQCCALDCFPRVKIIHTSSKIHGQ). A helical membrane pass occupies residues 393 to 413 (IYIPEVNWMLMCLCLAVTIGL). The Extracellular segment spans residues 414–424 (RDTNMMGHAYG). A helical membrane pass occupies residues 425-445 (LAVTSVMLVTTCLMTLVMTIV). The Cytoplasmic portion of the chain corresponds to 446 to 449 (WKQR). The chain crosses the membrane as a helical span at residues 450–470 (IITVLAFVVFFGSIELLYFSS). Residues 471-474 (CVYK) are Extracellular-facing. The helical transmembrane segment at 475-495 (VPEGGWIPILLSLTFMAVMYI) threads the bilayer. Residues 496 to 712 (WNYGTTKKHE…LLEVGMVYYV (217 aa)) are Cytoplasmic-facing.

This sequence belongs to the HAK/KUP transporter (TC 2.A.72.3) family. As to expression, detected in the whole mature plant but preferentially expressed in roots and stems, and in potassium-starved plants.

The protein resides in the cell membrane. In terms of biological role, high-affinity potassium transporter that could play a major role in the uptake of potassium from the rhizosphere. May act as a low-affinity potassium transporter under high potassium concentrations. Could also transport rubidium. The sequence is that of Potassium transporter 1 (POT1) from Arabidopsis thaliana (Mouse-ear cress).